A 250-amino-acid chain; its full sequence is 2,3-bisphosphoglycerate-dependent phosphoglycerate mutase (250 aa).

Substrate contacts are provided by residues 10–17 (RHGESQWN), 23–24 (TG), Arg-62, 89–92 (ERHY), Lys-100, 116–117 (RR), and 185–186 (GN). His-11 serves as the catalytic Tele-phosphohistidine intermediate. Glu-89 serves as the catalytic Proton donor/acceptor.

Belongs to the phosphoglycerate mutase family. BPG-dependent PGAM subfamily. As to quaternary structure, homodimer.

It catalyses the reaction (2R)-2-phosphoglycerate = (2R)-3-phosphoglycerate. The protein operates within carbohydrate degradation; glycolysis; pyruvate from D-glyceraldehyde 3-phosphate: step 3/5. Its function is as follows. Catalyzes the interconversion of 2-phosphoglycerate and 3-phosphoglycerate. This is 2,3-bisphosphoglycerate-dependent phosphoglycerate mutase from Salmonella agona (strain SL483).